A 437-amino-acid chain; its full sequence is AA9 family lytic polysaccharide monooxygenase H (437 aa).

The signal sequence occupies residues 1–21; that stretch reads MNLSLFTLALVACYSSQLAAA. H22 contacts Cu(2+). C64 and C193 are oxidised to a cystine. Residues N67 and N79 are each glycosylated (N-linked (GlcNAc...) asparagine). H104 contributes to the Cu(2+) binding site. Residues N120 and N138 are each glycosylated (N-linked (GlcNAc...) asparagine). H178 and Q188 together coordinate O2. Cu(2+) is bound at residue Y190. N-linked (GlcNAc...) asparagine glycosylation is found at N252 and N307. Positions 392-437 constitute a Chitin-binding type-1 domain; sequence DGKCGDGNGQTCKGSLLGECCSQVGYCGSSESYCGVGCQGNFGVCG. Intrachain disulfides connect C395-C412, C403-C418, C411-C425, and C429-C436.

Belongs to the polysaccharide monooxygenase AA9 family. It depends on Cu(2+) as a cofactor.

It is found in the secreted. It carries out the reaction [(1-&gt;4)-beta-D-glucosyl]n+m + reduced acceptor + O2 = 4-dehydro-beta-D-glucosyl-[(1-&gt;4)-beta-D-glucosyl]n-1 + [(1-&gt;4)-beta-D-glucosyl]m + acceptor + H2O.. Lytic polysaccharide monooxygenase (LPMO) that depolymerizes crystalline and amorphous polysaccharides via the oxidation of scissile alpha- or beta-(1-4)-glycosidic bonds, yielding C1 and C4 oxidation products. Catalysis by LPMOs requires the reduction of the active-site copper from Cu(II) to Cu(I) by a reducing agent and H(2)O(2) or O(2) as a cosubstrate. In Botryotinia fuckeliana (strain B05.10) (Noble rot fungus), this protein is AA9 family lytic polysaccharide monooxygenase H.